A 269-amino-acid polypeptide reads, in one-letter code: Small ribosomal subunit protein uS2 (269 aa).

The interval 224-269 (ANQGREDSEDVYSETENDTEETDEELVSEEDLKEFVENSEEESDEE) is disordered. Acidic residues predominate over residues 230 to 269 (DSEDVYSETENDTEETDEELVSEEDLKEFVENSEEESDEE).

This sequence belongs to the universal ribosomal protein uS2 family.

The sequence is that of Small ribosomal subunit protein uS2 from Finegoldia magna (strain ATCC 29328 / DSM 20472 / WAL 2508) (Peptostreptococcus magnus).